Consider the following 307-residue polypeptide: Tropinone reductase homolog At2g29340 (307 aa).

Residue 13-37 (LVTGGASGIGYAIVEELAGFGARIH) coordinates NADP(+). Residue S146 coordinates substrate. The active-site Proton acceptor is the Y159.

It belongs to the short-chain dehydrogenases/reductases (SDR) family. SDR65C subfamily.

The chain is Tropinone reductase homolog At2g29340 from Arabidopsis thaliana (Mouse-ear cress).